A 485-amino-acid chain; its full sequence is Cysteine--tRNA ligase (485 aa).

Cys29 contacts Zn(2+). The 'HIGH' region signature appears at 31–41 (VTVYDHCHIGH). The Zn(2+) site is built by Cys209, His234, and Glu238. A 'KMSKS' region motif is present at residues 266–270 (KMSKS). Lys269 is an ATP binding site.

It belongs to the class-I aminoacyl-tRNA synthetase family. Monomer. Requires Zn(2+) as cofactor.

Its subcellular location is the cytoplasm. The catalysed reaction is tRNA(Cys) + L-cysteine + ATP = L-cysteinyl-tRNA(Cys) + AMP + diphosphate. The protein is Cysteine--tRNA ligase of Geobacter metallireducens (strain ATCC 53774 / DSM 7210 / GS-15).